The following is a 423-amino-acid chain: Alpha-1-antichymotrypsin (423 aa).

Residues 1–23 form the signal peptide; sequence MERMLPLLALGLLAAGFCPAVLC. N-linked (GlcNAc...) asparagine glycans are attached at residues N33, N93, N106, N127, and N186. A DNA-binding region spans residues 235–237; that stretch reads KKK. N-linked (GlcNAc...) asparagine glycosylation is present at N271. An RCL region spans residues 369 to 394; the sequence is GTEASAATAVKITLLSALVETRTIVR. The segment at 381-389 is O-glycosylated at one site; it reads TLLSALVET.

Belongs to the serpin family. As to quaternary structure, interacts with DNAJC1. Post-translationally, N- and O-glycosylated. As to expression, plasma. Synthesized in the liver. Like the related alpha-1-antitrypsin, its concentration increases in the acute phase of inflammation or infection. Found in the amyloid plaques from the hippocampus of Alzheimer disease brains.

The protein localises to the secreted. In terms of biological role, although its physiological function is unclear, it can inhibit neutrophil cathepsin G and mast cell chymase, both of which can convert angiotensin-1 to the active angiotensin-2. The sequence is that of Alpha-1-antichymotrypsin (SERPINA3) from Homo sapiens (Human).